The primary structure comprises 329 residues: tRNA N6-adenosine threonylcarbamoyltransferase (329 aa).

Fe cation-binding residues include histidine 107 and histidine 111. Substrate-binding positions include 129–133, aspartate 162, glycine 175, and asparagine 268; that span reads LVSGG. Residue aspartate 296 participates in Fe cation binding.

This sequence belongs to the KAE1 / TsaD family. Fe(2+) is required as a cofactor.

The protein resides in the cytoplasm. It carries out the reaction L-threonylcarbamoyladenylate + adenosine(37) in tRNA = N(6)-L-threonylcarbamoyladenosine(37) in tRNA + AMP + H(+). Its function is as follows. Required for the formation of a threonylcarbamoyl group on adenosine at position 37 (t(6)A37) in tRNAs that read codons beginning with adenine. Is involved in the transfer of the threonylcarbamoyl moiety of threonylcarbamoyl-AMP (TC-AMP) to the N6 group of A37, together with TsaE and TsaB. TsaD likely plays a direct catalytic role in this reaction. This chain is tRNA N6-adenosine threonylcarbamoyltransferase, found in Nitratiruptor sp. (strain SB155-2).